A 276-amino-acid chain; its full sequence is Diaminopimelate epimerase (276 aa).

Substrate is bound by residues Asn-13, Gln-46, and Asn-66. Cys-75 serves as the catalytic Proton donor. Residues 76-77, Asn-159, Asn-192, and 210-211 each bind substrate; these read GN and ER. Residue Cys-219 is the Proton acceptor of the active site. Substrate is bound at residue 220-221; sequence GT.

The protein belongs to the diaminopimelate epimerase family. As to quaternary structure, homodimer.

It localises to the cytoplasm. The enzyme catalyses (2S,6S)-2,6-diaminopimelate = meso-2,6-diaminopimelate. Its pathway is amino-acid biosynthesis; L-lysine biosynthesis via DAP pathway; DL-2,6-diaminopimelate from LL-2,6-diaminopimelate: step 1/1. Functionally, catalyzes the stereoinversion of LL-2,6-diaminopimelate (L,L-DAP) to meso-diaminopimelate (meso-DAP), a precursor of L-lysine and an essential component of the bacterial peptidoglycan. This chain is Diaminopimelate epimerase, found in Pseudomonas fluorescens (strain Pf0-1).